A 545-amino-acid polypeptide reads, in one-letter code: Glucose-6-phosphate isomerase (545 aa).

Glu343 acts as the Proton donor in catalysis. Active-site residues include His374 and Lys513.

This sequence belongs to the GPI family.

The protein resides in the cytoplasm. The enzyme catalyses alpha-D-glucose 6-phosphate = beta-D-fructose 6-phosphate. Its pathway is carbohydrate biosynthesis; gluconeogenesis. It participates in carbohydrate degradation; glycolysis; D-glyceraldehyde 3-phosphate and glycerone phosphate from D-glucose: step 2/4. Functionally, catalyzes the reversible isomerization of glucose-6-phosphate to fructose-6-phosphate. The polypeptide is Glucose-6-phosphate isomerase (Methylibium petroleiphilum (strain ATCC BAA-1232 / LMG 22953 / PM1)).